The chain runs to 343 residues: Small ribosomal subunit biogenesis GTPase RsgA (343 aa).

A disordered region spans residues 1–32; it reads MAKRRLSKRQVDRIRERQSQRLDTSVAAPDGK. Positions 9-20 are enriched in basic and acidic residues; that stretch reads RQVDRIRERQSQ. A CP-type G domain is found at 109 to 273; that stretch reads YGKLKPVAAN…CIDSPGIREF (165 aa). Residues 156–159 and 215–223 contribute to the GTP site; these read NKLD and GQSGVGKSS. Zn(2+) contacts are provided by Cys-297, Cys-302, His-304, and Cys-310.

The protein belongs to the TRAFAC class YlqF/YawG GTPase family. RsgA subfamily. As to quaternary structure, monomer. Associates with 30S ribosomal subunit, binds 16S rRNA. Zn(2+) is required as a cofactor.

The protein resides in the cytoplasm. Functionally, one of several proteins that assist in the late maturation steps of the functional core of the 30S ribosomal subunit. Helps release RbfA from mature subunits. May play a role in the assembly of ribosomal proteins into the subunit. Circularly permuted GTPase that catalyzes slow GTP hydrolysis, GTPase activity is stimulated by the 30S ribosomal subunit. This Saccharophagus degradans (strain 2-40 / ATCC 43961 / DSM 17024) protein is Small ribosomal subunit biogenesis GTPase RsgA.